The chain runs to 350 residues: Spermidine/putrescine import ATP-binding protein PotA (350 aa).

One can recognise an ABC transporter domain in the interval 6–236 (LELRNVTKDY…PENLWVAKFI (231 aa)). Residue 38 to 45 (GPSGCGKT) coordinates ATP.

Belongs to the ABC transporter superfamily. Spermidine/putrescine importer (TC 3.A.1.11.1) family. In terms of assembly, the complex is composed of two ATP-binding proteins (PotA), two transmembrane proteins (PotB and PotC) and a solute-binding protein (PotD).

It localises to the cell membrane. The enzyme catalyses ATP + H2O + polyamine-[polyamine-binding protein]Side 1 = ADP + phosphate + polyamineSide 2 + [polyamine-binding protein]Side 1.. In terms of biological role, part of the ABC transporter complex PotABCD involved in spermidine/putrescine import. Responsible for energy coupling to the transport system. The chain is Spermidine/putrescine import ATP-binding protein PotA from Mesoplasma florum (strain ATCC 33453 / NBRC 100688 / NCTC 11704 / L1) (Acholeplasma florum).